The chain runs to 311 residues: Sulfate adenylyltransferase subunit 2 (311 aa).

This sequence belongs to the PAPS reductase family. CysD subfamily. Heterodimer composed of CysD, the smaller subunit, and CysN.

It catalyses the reaction sulfate + ATP + H(+) = adenosine 5'-phosphosulfate + diphosphate. It functions in the pathway sulfur metabolism; hydrogen sulfide biosynthesis; sulfite from sulfate: step 1/3. With CysN forms the ATP sulfurylase (ATPS) that catalyzes the adenylation of sulfate producing adenosine 5'-phosphosulfate (APS) and diphosphate, the first enzymatic step in sulfur assimilation pathway. APS synthesis involves the formation of a high-energy phosphoric-sulfuric acid anhydride bond driven by GTP hydrolysis by CysN coupled to ATP hydrolysis by CysD. The protein is Sulfate adenylyltransferase subunit 2 of Caulobacter vibrioides (strain ATCC 19089 / CIP 103742 / CB 15) (Caulobacter crescentus).